The primary structure comprises 109 residues: Thioredoxin (109 aa).

One can recognise a Thioredoxin domain in the interval 2–107; the sequence is SISQVIDTSF…LLNTLQKHLK (106 aa). Active-site nucleophile residues include Cys31 and Cys34. Cys31 and Cys34 are disulfide-bonded.

Belongs to the thioredoxin family.

The protein localises to the plastid. It localises to the chloroplast. In terms of biological role, participates in various redox reactions through the reversible oxidation of its active center dithiol to a disulfide and catalyzes dithiol-disulfide exchange reactions. This chain is Thioredoxin (trxA), found in Griffithsia pacifica (Red alga).